The following is a 137-amino-acid chain: MAKLKLTITTPSAIFYDDLVDIVTLRVNLGYKGFLPNASEFFSNIEPGTLTINYENSSDMIKCHIGSGLIYSNKESVNIITDDIVKIEDINLDALNKQKEMLENRLKENLRESLLKQVEEKLENINSRIKAYNEFKK.

It belongs to the ATPase epsilon chain family. As to quaternary structure, F-type ATPases have 2 components, CF(1) - the catalytic core - and CF(0) - the membrane proton channel. CF(1) has five subunits: alpha(3), beta(3), gamma(1), delta(1), epsilon(1). CF(0) has three main subunits: a, b and c.

It localises to the cell membrane. Produces ATP from ADP in the presence of a proton gradient across the membrane. The protein is ATP synthase epsilon chain of Mycoplasmopsis synoviae (strain 53) (Mycoplasma synoviae).